The chain runs to 130 residues: Flagellar assembly factor FliW (130 aa).

The protein belongs to the FliW family. As to quaternary structure, interacts with translational regulator CsrA and flagellin(s).

It is found in the cytoplasm. Functionally, acts as an anti-CsrA protein, binds CsrA and prevents it from repressing translation of its target genes, one of which is flagellin. Binds to flagellin and participates in the assembly of the flagellum. The sequence is that of Flagellar assembly factor FliW from Borreliella burgdorferi (strain ATCC 35210 / DSM 4680 / CIP 102532 / B31) (Borrelia burgdorferi).